A 187-amino-acid chain; its full sequence is Protein GrpE (187 aa).

Residues 1-26 (MNDLKNAENGPDEADTPQGAPSQEPD) form a disordered region.

The protein belongs to the GrpE family. In terms of assembly, homodimer.

The protein localises to the cytoplasm. In terms of biological role, participates actively in the response to hyperosmotic and heat shock by preventing the aggregation of stress-denatured proteins, in association with DnaK and GrpE. It is the nucleotide exchange factor for DnaK and may function as a thermosensor. Unfolded proteins bind initially to DnaJ; upon interaction with the DnaJ-bound protein, DnaK hydrolyzes its bound ATP, resulting in the formation of a stable complex. GrpE releases ADP from DnaK; ATP binding to DnaK triggers the release of the substrate protein, thus completing the reaction cycle. Several rounds of ATP-dependent interactions between DnaJ, DnaK and GrpE are required for fully efficient folding. The chain is Protein GrpE from Methylocella silvestris (strain DSM 15510 / CIP 108128 / LMG 27833 / NCIMB 13906 / BL2).